Reading from the N-terminus, the 308-residue chain is Glutaminase (308 aa).

The substrate site is built by Ser-66, Asn-117, Glu-161, Asn-168, Tyr-192, Tyr-244, and Val-262.

Belongs to the glutaminase family. As to quaternary structure, homotetramer.

It catalyses the reaction L-glutamine + H2O = L-glutamate + NH4(+). In Klebsiella pneumoniae subsp. pneumoniae (strain ATCC 700721 / MGH 78578), this protein is Glutaminase.